The following is a 241-amino-acid chain: tRNA pseudouridine synthase A (241 aa).

The active-site Nucleophile is the aspartate 51. Tyrosine 110 contacts substrate.

It belongs to the tRNA pseudouridine synthase TruA family. Homodimer.

The enzyme catalyses uridine(38/39/40) in tRNA = pseudouridine(38/39/40) in tRNA. Formation of pseudouridine at positions 38, 39 and 40 in the anticodon stem and loop of transfer RNAs. This chain is tRNA pseudouridine synthase A, found in Campylobacter jejuni subsp. jejuni serotype O:2 (strain ATCC 700819 / NCTC 11168).